Here is a 112-residue protein sequence, read N- to C-terminus: Nucleoid-associated protein CPR_0056 (112 aa).

Positions 91-100 (ASEETSEKMG) are enriched in basic and acidic residues. The interval 91–112 (ASEETSEKMGKLTGGMGMPGLF) is disordered. Residues 102 to 112 (LTGGMGMPGLF) show a composition bias toward gly residues.

It belongs to the YbaB/EbfC family. As to quaternary structure, homodimer.

The protein localises to the cytoplasm. It localises to the nucleoid. Binds to DNA and alters its conformation. May be involved in regulation of gene expression, nucleoid organization and DNA protection. This is Nucleoid-associated protein CPR_0056 from Clostridium perfringens (strain SM101 / Type A).